Reading from the N-terminus, the 341-residue chain is UDP-N-acetylenolpyruvoylglucosamine reductase (341 aa).

Residues 12 to 182 (LSAYAKRLDI…ISVGLLLKKN (171 aa)) enclose the FAD-binding PCMH-type domain. Residue arginine 158 is part of the active site. Serine 228 acts as the Proton donor in catalysis. The active site involves glutamate 324.

Belongs to the MurB family. Requires FAD as cofactor.

The protein resides in the cytoplasm. The enzyme catalyses UDP-N-acetyl-alpha-D-muramate + NADP(+) = UDP-N-acetyl-3-O-(1-carboxyvinyl)-alpha-D-glucosamine + NADPH + H(+). Its pathway is cell wall biogenesis; peptidoglycan biosynthesis. In terms of biological role, cell wall formation. This Photorhabdus laumondii subsp. laumondii (strain DSM 15139 / CIP 105565 / TT01) (Photorhabdus luminescens subsp. laumondii) protein is UDP-N-acetylenolpyruvoylglucosamine reductase.